Consider the following 119-residue polypeptide: Circadian clock oscillator protein KaiB (119 aa).

It belongs to the KaiB family. May undergo a major conformational rearrangment; in the free state forms homooligomers. When bound to KaiC switches to a monomeric thioredoxin-fold (KaiB(fs)). The active oscillator complex is probably KaiC(6):KaiB(6).

Functionally, component of the KaiBC clock protein complex, which constitutes the main circadian regulator in cyanobacteria; it may modify the ATPase activity of KaiC. May be a metamorphic protein which reversibly switches between an inactive tetrameric fold and a rare, thioredoxin-like monomeric fold (KaiB(fs)). KaiB(fs) binds phospho-KaiC, and perhaps clock output effectors. The polypeptide is Circadian clock oscillator protein KaiB (Prochlorococcus marinus (strain MIT 9303)).